The sequence spans 404 residues: L-cysteine:1D-myo-inositol 2-amino-2-deoxy-alpha-D-glucopyranoside ligase 1 (404 aa).

Residue Cys-47 participates in Zn(2+) binding. Residues 47–50 (CGIT), Thr-62, and 85–87 (NIT) contribute to the L-cysteinyl-5'-AMP site. The 'HIGH' region motif lies at 49-59 (ITPYDSTHLGH). A 'ERGGDP' region motif is present at residues 188-193 (ERGGDP). Trp-228 contributes to the L-cysteinyl-5'-AMP binding site. A Zn(2+)-binding site is contributed by Cys-232. An L-cysteinyl-5'-AMP-binding site is contributed by 250-252 (GSD). His-257 is a Zn(2+) binding site. Position 284 (Ile-284) interacts with L-cysteinyl-5'-AMP. The short motif at 290 to 294 (KMSKS) is the 'KMSKS' region element.

This sequence belongs to the class-I aminoacyl-tRNA synthetase family. MshC subfamily. Monomer. Requires Zn(2+) as cofactor.

The catalysed reaction is 1D-myo-inositol 2-amino-2-deoxy-alpha-D-glucopyranoside + L-cysteine + ATP = 1D-myo-inositol 2-(L-cysteinylamino)-2-deoxy-alpha-D-glucopyranoside + AMP + diphosphate + H(+). Catalyzes the ATP-dependent condensation of GlcN-Ins and L-cysteine to form L-Cys-GlcN-Ins. In Corynebacterium jeikeium (strain K411), this protein is L-cysteine:1D-myo-inositol 2-amino-2-deoxy-alpha-D-glucopyranoside ligase 1.